The following is a 414-amino-acid chain: tRNA methyltransferase 10 homolog C (414 aa).

A mitochondrion-targeting transit peptide spans 1–35 (MNVTVRFLRPFARYLVPYTFHRTRSNSYSRVLQRY). Ser-79 is modified (phosphoserine). Residues 133-162 (GKEMMKKAKQMKKEMKAAAREEAKRARSLE) are a coiled coil. The SAM-dependent MTase TRM10-type domain occupies 186-378 (LGWKGVQAMQ…KFVPRRKHTG (193 aa)).

Belongs to the class IV-like SAM-binding methyltransferase superfamily. TRM10 family. As to quaternary structure, component of mitochondrial ribonuclease P, a complex composed of TRMT10C/MRPP1, HSD17B10/MRPP2 and PRORP/MRPP3. Interacts with HSD17B10/MRPP2; forming the MRPP1-MRPP2 subcomplex of the mitochondrial ribonuclease P complex. Interacts with GRSF1.

The protein resides in the mitochondrion matrix. Its subcellular location is the mitochondrion nucleoid. It carries out the reaction adenosine(9) in tRNA + S-adenosyl-L-methionine = N(1)-methyladenosine(9) in tRNA + S-adenosyl-L-homocysteine + H(+). The enzyme catalyses guanosine(9) in tRNA + S-adenosyl-L-methionine = N(1)-methylguanosine(9) in tRNA + S-adenosyl-L-homocysteine + H(+). It catalyses the reaction an adenosine in mRNA + S-adenosyl-L-methionine = an N(1)-methyladenosine in mRNA + S-adenosyl-L-homocysteine + H(+). Functionally, mitochondrial tRNA N(1)-methyltransferase involved in mitochondrial tRNA maturation. Component of mitochondrial ribonuclease P, a complex composed of TRMT10C/MRPP1, HSD17B10/MRPP2 and PRORP/MRPP3, which cleaves tRNA molecules in their 5'-ends. Together with HSD17B10/MRPP2, forms a subcomplex of the mitochondrial ribonuclease P, named MRPP1-MRPP2 subcomplex, which displays functions that are independent of the ribonuclease P activity. The MRPP1-MRPP2 subcomplex catalyzes the formation of N(1)-methylguanine and N(1)-methyladenine at position 9 (m1G9 and m1A9, respectively) in tRNAs; TRMT10C/MRPP1 acting as the catalytic N(1)-methyltransferase subunit. The MRPP1-MRPP2 subcomplex also acts as a tRNA maturation platform: following 5'-end cleavage by the mitochondrial ribonuclease P complex, the MRPP1-MRPP2 subcomplex enhances the efficiency of 3'-processing catalyzed by ELAC2, retains the tRNA product after ELAC2 processing and presents the nascent tRNA to the mitochondrial CCA tRNA nucleotidyltransferase TRNT1 enzyme. In addition to tRNA N(1)-methyltransferase activity, TRMT10C/MRPP1 also acts as a mRNA N(1)-methyltransferase by mediating methylation of adenosine residues at the N(1) position of MT-ND5 mRNA. Associates with mitochondrial DNA complexes at the nucleoids to initiate RNA processing and ribosome assembly. This is tRNA methyltransferase 10 homolog C from Rattus norvegicus (Rat).